A 613-amino-acid chain; its full sequence is Proteasome-associated ATPase (613 aa).

Residues 1-29 are disordered; sequence MSESERSEGFPEGFAGAGSGSLSSEDAAE. The stretch at 23–100 forms a coiled coil; it reads SSEDAAELEA…LREEVDRLGQ (78 aa). 300-305 contributes to the ATP binding site; it reads GCGKTL. Residue lysine 595 forms an Isoglutamyl lysine isopeptide (Lys-Gln) (interchain with Q-Cter in protein Pup) linkage. Residues 612 to 613 form a docks into pockets in the proteasome alpha-ring region; the sequence is YL.

Belongs to the AAA ATPase family. In terms of assembly, homohexamer. Assembles into a hexameric ring structure that caps the 20S proteasome core. Strongly interacts with the prokaryotic ubiquitin-like protein Pup through a hydrophobic interface; the interacting region of ARC lies in its N-terminal coiled-coil domain. There is one Pup binding site per ARC hexamer ring. Upon ATP-binding, the C-terminus of ARC interacts with the alpha-rings of the proteasome core, possibly by binding to the intersubunit pockets.

It participates in protein degradation; proteasomal Pup-dependent pathway. Its function is as follows. ATPase which is responsible for recognizing, binding, unfolding and translocation of pupylated proteins into the bacterial 20S proteasome core particle. May be essential for opening the gate of the 20S proteasome via an interaction with its C-terminus, thereby allowing substrate entry and access to the site of proteolysis. Thus, the C-termini of the proteasomal ATPase may function like a 'key in a lock' to induce gate opening and therefore regulate proteolysis. This is Proteasome-associated ATPase from Mycolicibacterium smegmatis (strain ATCC 700084 / mc(2)155) (Mycobacterium smegmatis).